The primary structure comprises 185 residues: Ribosome-recycling factor (185 aa).

Belongs to the RRF family.

The protein resides in the cytoplasm. Functionally, responsible for the release of ribosomes from messenger RNA at the termination of protein biosynthesis. May increase the efficiency of translation by recycling ribosomes from one round of translation to another. This chain is Ribosome-recycling factor, found in Geobacter sp. (strain M21).